Reading from the N-terminus, the 391-residue chain is tRNA-specific 2-thiouridylase MnmA (391 aa).

ATP-binding positions include 35–42 (GLSGGVDS) and Leu-61. Cys-122 functions as the Nucleophile in the catalytic mechanism. A disulfide bridge connects residues Cys-122 and Cys-221. Residue Gly-147 coordinates ATP. The tract at residues 171–173 (KDQ) is interaction with tRNA. Residue Cys-221 is the Cysteine persulfide intermediate of the active site. Residues 328–329 (RY) form an interaction with tRNA region.

Belongs to the MnmA/TRMU family.

The protein localises to the cytoplasm. It carries out the reaction S-sulfanyl-L-cysteinyl-[protein] + uridine(34) in tRNA + AH2 + ATP = 2-thiouridine(34) in tRNA + L-cysteinyl-[protein] + A + AMP + diphosphate + H(+). Its function is as follows. Catalyzes the 2-thiolation of uridine at the wobble position (U34) of tRNA, leading to the formation of s(2)U34. This is tRNA-specific 2-thiouridylase MnmA from Synechococcus sp. (strain CC9311).